Consider the following 1036-residue polypeptide: Isoleucine--tRNA ligase (1036 aa).

Residues 46 to 56 carry the 'HIGH' region motif; that stretch reads PFATGLPHYGH. Positions 589 to 593 match the 'KMSKS' region motif; the sequence is KMSKR. Lys-592 is a binding site for ATP.

Belongs to the class-I aminoacyl-tRNA synthetase family. IleS type 2 subfamily. Monomer. Zn(2+) serves as cofactor.

The protein resides in the cytoplasm. It catalyses the reaction tRNA(Ile) + L-isoleucine + ATP = L-isoleucyl-tRNA(Ile) + AMP + diphosphate. In terms of biological role, catalyzes the attachment of isoleucine to tRNA(Ile). As IleRS can inadvertently accommodate and process structurally similar amino acids such as valine, to avoid such errors it has two additional distinct tRNA(Ile)-dependent editing activities. One activity is designated as 'pretransfer' editing and involves the hydrolysis of activated Val-AMP. The other activity is designated 'posttransfer' editing and involves deacylation of mischarged Val-tRNA(Ile). The polypeptide is Isoleucine--tRNA ligase (Chlamydia trachomatis serovar L2b (strain UCH-1/proctitis)).